The following is a 349-amino-acid chain: tRNA pseudouridine synthase D (349 aa).

Position 27 (Phe27) interacts with substrate. Residue Asp80 is the Nucleophile of the active site. Residue Asn129 participates in substrate binding. The region spanning 155–303 (GVPNYFGAQR…VEAARRAMLL (149 aa)) is the TRUD domain. Residue Phe329 participates in substrate binding.

It belongs to the pseudouridine synthase TruD family.

The enzyme catalyses uridine(13) in tRNA = pseudouridine(13) in tRNA. Functionally, responsible for synthesis of pseudouridine from uracil-13 in transfer RNAs. In Shigella sonnei (strain Ss046), this protein is tRNA pseudouridine synthase D.